We begin with the raw amino-acid sequence, 246 residues long: Aspartate/glutamate leucyltransferase (246 aa).

This sequence belongs to the R-transferase family. Bpt subfamily.

It localises to the cytoplasm. The catalysed reaction is N-terminal L-glutamyl-[protein] + L-leucyl-tRNA(Leu) = N-terminal L-leucyl-L-glutamyl-[protein] + tRNA(Leu) + H(+). It catalyses the reaction N-terminal L-aspartyl-[protein] + L-leucyl-tRNA(Leu) = N-terminal L-leucyl-L-aspartyl-[protein] + tRNA(Leu) + H(+). Functions in the N-end rule pathway of protein degradation where it conjugates Leu from its aminoacyl-tRNA to the N-termini of proteins containing an N-terminal aspartate or glutamate. The polypeptide is Aspartate/glutamate leucyltransferase (Rhodospirillum rubrum (strain ATCC 11170 / ATH 1.1.1 / DSM 467 / LMG 4362 / NCIMB 8255 / S1)).